We begin with the raw amino-acid sequence, 119 residues long: Large ribosomal subunit protein bL20 (119 aa).

It belongs to the bacterial ribosomal protein bL20 family.

Functionally, binds directly to 23S ribosomal RNA and is necessary for the in vitro assembly process of the 50S ribosomal subunit. It is not involved in the protein synthesizing functions of that subunit. The sequence is that of Large ribosomal subunit protein bL20 from Chloroflexus aurantiacus (strain ATCC 29366 / DSM 635 / J-10-fl).